A 229-amino-acid polypeptide reads, in one-letter code: MGILAALDLHPYTLVVSSFTVLLIQQLVGFIGKSTIQEFAWLFYLRVGGKLGLSNSFVAHTKKQEELHKLNREKRSISAQDEYAKWTKLNRQAEKLTAEVKSLSDDIAKDKSKINSLVGVVLLFLTTLPLWVFRLWFRKSVLFYLPTGVFPYYVERVLAIPFFASGSVGLTVWMFAVNNVISSVLFLLTFPFKPSVPIPIRQTKVEEVVPESAESKESSPEVIDIADAN.

The Lumenal portion of the chain corresponds to 1–14 (MGILAALDLHPYTL). Residues 15-34 (VVSSFTVLLIQQLVGFIGKS) form a helical membrane-spanning segment. At 35–122 (TIQEFAWLFY…KINSLVGVVL (88 aa)) the chain is on the cytoplasmic side. A coiled-coil region spans residues 60 to 117 (HTKKQEELHKLNREKRSISAQDEYAKWTKLNRQAEKLTAEVKSLSDDIAKDKSKINSL). The helical transmembrane segment at 123–143 (LFLTTLPLWVFRLWFRKSVLF) threads the bilayer. Residues 144–167 (YLPTGVFPYYVERVLAIPFFASGS) lie on the Lumenal side of the membrane. The chain crosses the membrane as a helical span at residues 168-184 (VGLTVWMFAVNNVISSV). Residues 185 to 229 (LFLLTFPFKPSVPIPIRQTKVEEVVPESAESKESSPEVIDIADAN) are Cytoplasmic-facing. The segment covering 210-219 (PESAESKESS) has biased composition (basic and acidic residues). The interval 210–229 (PESAESKESSPEVIDIADAN) is disordered.

This sequence belongs to the WRB/GET1 family. As to quaternary structure, component of the Golgi to ER traffic (GET) complex, which is composed of GET1, GET2 and GET3. Within the complex, GET1 and GET2 form a heterotetramer which is stabilized by phosphatidylinositol binding and which binds to the GET3 homodimer.

Its subcellular location is the endoplasmic reticulum membrane. The protein localises to the golgi apparatus membrane. Functionally, required for the post-translational delivery of tail-anchored (TA) proteins to the endoplasmic reticulum. Together with GET2, acts as a membrane receptor for soluble GET3, which recognizes and selectively binds the transmembrane domain of TA proteins in the cytosol. The GET complex cooperates with the HDEL receptor ERD2 to mediate the ATP-dependent retrieval of resident ER proteins that contain a C-terminal H-D-E-L retention signal from the Golgi to the ER. The polypeptide is Golgi to ER traffic protein 1 (Scheffersomyces stipitis (strain ATCC 58785 / CBS 6054 / NBRC 10063 / NRRL Y-11545) (Yeast)).